The following is a 270-amino-acid chain: Shikimate dehydrogenase (NADP(+)) (270 aa).

Shikimate is bound by residues 14–16 (SKS) and Thr-61. Catalysis depends on Lys-65, which acts as the Proton acceptor. Asn-86 and Asp-101 together coordinate shikimate. NADP(+) is bound by residues 126–130 (GAGGA), 150–155 (NRTVSK), and Met-213. Tyr-215 provides a ligand contact to shikimate. Gly-237 contributes to the NADP(+) binding site.

This sequence belongs to the shikimate dehydrogenase family. As to quaternary structure, homodimer.

The enzyme catalyses shikimate + NADP(+) = 3-dehydroshikimate + NADPH + H(+). It functions in the pathway metabolic intermediate biosynthesis; chorismate biosynthesis; chorismate from D-erythrose 4-phosphate and phosphoenolpyruvate: step 4/7. Functionally, involved in the biosynthesis of the chorismate, which leads to the biosynthesis of aromatic amino acids. Catalyzes the reversible NADPH linked reduction of 3-dehydroshikimate (DHSA) to yield shikimate (SA). This is Shikimate dehydrogenase (NADP(+)) from Hahella chejuensis (strain KCTC 2396).